The following is a 317-amino-acid chain: MPVQGSQRRLLGSLNSTPTATPHLGLAANQTGARCLEVSIPDGLFLSLGLVSLVENVLVVTAIAKNRNLHSPMYCFICCLALSDLLVSGSNMLETAVTLLLEAGALAARAAVVQQLDNVIDVITCSSMLSSLCFLGAIAVDRYISIFYALRYHSIVTLPRARRAVAAIWVASVLFSMLFIAYYDHAAVLLCLVVFFLAMLVLMAVLYVHMLARACQHAQGIARLHKRQRPAHQGFGLKGAATLTILLGIFFLCWGPFFLHLTLIVLCPQHPTCSCIFKNFNLFLALIICNAIIDPLIYAFRSQELRRTLKEVLLCSW.

The Extracellular segment spans residues 1–37 (MPVQGSQRRLLGSLNSTPTATPHLGLAANQTGARCLE). N-linked (GlcNAc...) asparagine glycosylation occurs at Asn-29. The chain crosses the membrane as a helical span at residues 38–63 (VSIPDGLFLSLGLVSLVENVLVVTAI). The Cytoplasmic portion of the chain corresponds to 64–72 (AKNRNLHSP). A helical membrane pass occupies residues 73-93 (MYCFICCLALSDLLVSGSNML). Topologically, residues 94–118 (ETAVTLLLEAGALAARAAVVQQLDN) are extracellular. The chain crosses the membrane as a helical span at residues 119–140 (VIDVITCSSMLSSLCFLGAIAV). Residues 141-163 (DRYISIFYALRYHSIVTLPRARR) lie on the Cytoplasmic side of the membrane. A helical membrane pass occupies residues 164-183 (AVAAIWVASVLFSMLFIAYY). Residues 184–191 (DHAAVLLC) are Extracellular-facing. The helical transmembrane segment at 192–211 (LVVFFLAMLVLMAVLYVHML) threads the bilayer. Topologically, residues 212 to 240 (ARACQHAQGIARLHKRQRPAHQGFGLKGA) are cytoplasmic. The helical transmembrane segment at 241-266 (ATLTILLGIFFLCWGPFFLHLTLIVL) threads the bilayer. Residues 267–279 (CPQHPTCSCIFKN) lie on the Extracellular side of the membrane. The chain crosses the membrane as a helical span at residues 280 to 300 (FNLFLALIICNAIIDPLIYAF). Topologically, residues 301-317 (RSQELRRTLKEVLLCSW) are cytoplasmic. Residue Cys-315 is the site of S-palmitoyl cysteine attachment.

It belongs to the G-protein coupled receptor 1 family. Interacts with MGRN1, but does not undergo MGRN1-mediated ubiquitination; this interaction competes with GNAS-binding and thus inhibits agonist-induced cAMP production. Interacts with OPN3; the interaction results in a decrease in MC1R-mediated cAMP signaling and ultimately a decrease in melanin production in melanocytes.

The protein resides in the cell membrane. In terms of biological role, receptor for MSH (alpha, beta and gamma) and ACTH. The activity of this receptor is mediated by G proteins which activate adenylate cyclase. Mediates melanogenesis, the production of eumelanin (black/brown) and phaeomelanin (red/yellow), via regulation of cAMP signaling in melanocytes. The chain is Melanocyte-stimulating hormone receptor (MC1R) from Miopithecus talapoin (Angolan talapoin).